The sequence spans 399 residues: Argininosuccinate synthase (399 aa).

9–17 serves as a coordination point for ATP; it reads AYSGGLDTS. Tyr-85 provides a ligand contact to L-citrulline. Gly-115 contacts ATP. Thr-117, Asn-121, and Asp-122 together coordinate L-aspartate. Asn-121 is an L-citrulline binding site. L-citrulline is bound by residues Arg-125, Ser-173, Glu-258, and Tyr-270.

Belongs to the argininosuccinate synthase family. Type 1 subfamily. As to quaternary structure, homotetramer.

It localises to the cytoplasm. The enzyme catalyses L-citrulline + L-aspartate + ATP = 2-(N(omega)-L-arginino)succinate + AMP + diphosphate + H(+). The protein operates within amino-acid biosynthesis; L-arginine biosynthesis; L-arginine from L-ornithine and carbamoyl phosphate: step 2/3. The chain is Argininosuccinate synthase from Streptococcus thermophilus (strain CNRZ 1066).